A 70-amino-acid chain; its full sequence is Protein FlmC (70 aa).

Its function is as follows. Component of a type I toxin-antitoxin (TA) system. Either this protein or sequences upstream of it are required for translation of downstream flmA; this could be translationally coupled to flmA. The protein is Protein FlmC (flmC) of Escherichia coli (strain K12).